Consider the following 307-residue polypeptide: Acetaldehyde dehydrogenase (307 aa).

12–15 contributes to the NAD(+) binding site; it reads SGNI. The Acyl-thioester intermediate role is filled by cysteine 127. Residues 158-166 and asparagine 278 each bind NAD(+); that span reads SAGPGTRQN.

It belongs to the acetaldehyde dehydrogenase family. Monomer. Can also form a heterotetramer composed of two aldolase (TTHB246) and two dehydrogenase (TTHB247) subunits. Upon complex formation, the aldolase shows a 5-fold increase in substrate affinity, while the dehydrogenase shows a 3-fold decrease; the kcat values of each enzyme are reduced by 2-fold when they are in a complex.

It catalyses the reaction acetaldehyde + NAD(+) + CoA = acetyl-CoA + NADH + H(+). It carries out the reaction propanal + NAD(+) + CoA = propanoyl-CoA + NADH + H(+). Functionally, catalyzes the conversion of acetaldehyde or propanal to acetyl-CoA or propanoyl-CoA, respectively, using NAD(+) and coenzyme A. The aldehyde substrates can be directly channeled from the aldolase TTHB246 to the dehydrogenase TTHB247. Is the final enzyme in the meta-cleavage pathway for the degradation of aromatic compounds. The sequence is that of Acetaldehyde dehydrogenase from Thermus thermophilus (strain ATCC 27634 / DSM 579 / HB8).